The chain runs to 264 residues: Hydroxyethylthiazole kinase (264 aa).

Methionine 41 lines the substrate pocket. 2 residues coordinate ATP: lysine 117 and serine 163. Glycine 190 contacts substrate.

This sequence belongs to the Thz kinase family. It depends on Mg(2+) as a cofactor.

The enzyme catalyses 5-(2-hydroxyethyl)-4-methylthiazole + ATP = 4-methyl-5-(2-phosphooxyethyl)-thiazole + ADP + H(+). It participates in cofactor biosynthesis; thiamine diphosphate biosynthesis; 4-methyl-5-(2-phosphoethyl)-thiazole from 5-(2-hydroxyethyl)-4-methylthiazole: step 1/1. Catalyzes the phosphorylation of the hydroxyl group of 4-methyl-5-beta-hydroxyethylthiazole (THZ). The chain is Hydroxyethylthiazole kinase from Thermoanaerobacter pseudethanolicus (strain ATCC 33223 / 39E) (Clostridium thermohydrosulfuricum).